The sequence spans 725 residues: 1,4-alpha-glucan branching enzyme GlgB (725 aa).

D403 (nucleophile) is an active-site residue. Residue E456 is the Proton donor of the active site.

It belongs to the glycosyl hydrolase 13 family. GlgB subfamily. As to quaternary structure, monomer.

It catalyses the reaction Transfers a segment of a (1-&gt;4)-alpha-D-glucan chain to a primary hydroxy group in a similar glucan chain.. It functions in the pathway glycan biosynthesis; glycogen biosynthesis. Its function is as follows. Catalyzes the formation of the alpha-1,6-glucosidic linkages in glycogen by scission of a 1,4-alpha-linked oligosaccharide from growing alpha-1,4-glucan chains and the subsequent attachment of the oligosaccharide to the alpha-1,6 position. The sequence is that of 1,4-alpha-glucan branching enzyme GlgB from Pectobacterium atrosepticum (strain SCRI 1043 / ATCC BAA-672) (Erwinia carotovora subsp. atroseptica).